A 146-amino-acid polypeptide reads, in one-letter code: MVIFSSYFSKQMNRFSTPFVFFFKKLNNTLKKSLQFIMRFHSYHPMFICLLRDSSRNENRKKKVSIGLRTIMRAFSFLMQVATCLIRYSLILTCLVAILLSVLWRIQFAALRMHDLIEEELKMFVLQHNCTLADLWSGKCPSSEDE.

A helical membrane pass occupies residues 85-104 (LIRYSLILTCLVAILLSVLW).

The protein resides in the cytoplasm. It localises to the membrane. Its function is as follows. Has a role in meiosis. In Schizosaccharomyces pombe (strain 972 / ATCC 24843) (Fission yeast), this protein is Meiotically up-regulated gene 96 protein (mug96).